Here is a 242-residue protein sequence, read N- to C-terminus: Small ribosomal subunit protein uS5 (242 aa).

Over residues 1 to 14 (MADENSTGPGNQPE) the composition is skewed to polar residues. Positions 1–65 (MADENSTGPG…DRRPRDEDGG (65 aa)) are disordered. A compositionally biased stretch (basic and acidic residues) spans 41-65 (DGGRGGRDGGRGRRDDRRPRDEDGG). One can recognise an S5 DRBM domain in the interval 68-131 (LIEKLVHINR…AAAKKAMIRV (64 aa)). Residues 204 to 242 (EQTSPKSVAQRRGKKVSDLIKRGGASDRAAEAEAAAVTE) form a disordered region. Residues 218-234 (KVSDLIKRGGASDRAAE) show a composition bias toward basic and acidic residues.

This sequence belongs to the universal ribosomal protein uS5 family. As to quaternary structure, part of the 30S ribosomal subunit. Contacts proteins S4 and S8.

With S4 and S12 plays an important role in translational accuracy. In terms of biological role, located at the back of the 30S subunit body where it stabilizes the conformation of the head with respect to the body. The polypeptide is Small ribosomal subunit protein uS5 (Sphingopyxis alaskensis (strain DSM 13593 / LMG 18877 / RB2256) (Sphingomonas alaskensis)).